A 301-amino-acid polypeptide reads, in one-letter code: D-alanine--D-alanine ligase (301 aa).

In terms of domain architecture, ATP-grasp spans 99–294 (KSVLEANGIR…FSELIDMIIQ (196 aa)). 126 to 181 (INELGYPVVVKPTHGGSSVATFIVKEEKEIENCVSEAFKWDSEVMIEKFIKGDEIT) provides a ligand contact to ATP. Mg(2+) contacts are provided by D248, E261, and N263.

The protein belongs to the D-alanine--D-alanine ligase family. It depends on Mg(2+) as a cofactor. Mn(2+) serves as cofactor.

It is found in the cytoplasm. It catalyses the reaction 2 D-alanine + ATP = D-alanyl-D-alanine + ADP + phosphate + H(+). Its pathway is cell wall biogenesis; peptidoglycan biosynthesis. Cell wall formation. The protein is D-alanine--D-alanine ligase of Clostridium beijerinckii (strain ATCC 51743 / NCIMB 8052) (Clostridium acetobutylicum).